A 177-amino-acid polypeptide reads, in one-letter code: Large ribosomal subunit protein uL6 (177 aa).

Belongs to the universal ribosomal protein uL6 family. In terms of assembly, part of the 50S ribosomal subunit.

Functionally, this protein binds to the 23S rRNA, and is important in its secondary structure. It is located near the subunit interface in the base of the L7/L12 stalk, and near the tRNA binding site of the peptidyltransferase center. The protein is Large ribosomal subunit protein uL6 of Delftia acidovorans (strain DSM 14801 / SPH-1).